Consider the following 389-residue polypeptide: E3 ubiquitin-protein ligase E3D (389 aa).

Position 2 is an N-acetylalanine (A2). Residues 129 to 159 (PLPSENWGALVGEWCCHPDPFANKPLHPQEN) carry the BRAT1-like motif motif. A Zn(2+)-binding site is contributed by C144. Residues 235-257 (QSSERSFPIIPRPRFVQSVIAQC) are interaction with UBE2C. The HECT-like stretch occupies residues 353 to 389 (LPSATCLELLLILSKSNANLPSSLRHMNSFQVAFLKI).

Interacts with UBE2C/UbcH10 (E2 ubiquitin-conjugating enzyme). In vitro, interacts with cyclin-B. In terms of processing, ubiquitinated by UBCH10 (E2 ubiquitin-conjugating enzyme).

It is found in the cytoplasm. It catalyses the reaction S-ubiquitinyl-[E2 ubiquitin-conjugating enzyme]-L-cysteine + [acceptor protein]-L-lysine = [E2 ubiquitin-conjugating enzyme]-L-cysteine + N(6)-ubiquitinyl-[acceptor protein]-L-lysine.. It participates in protein modification; protein ubiquitination. Its function is as follows. E3 ubiquitin-protein ligase which accepts ubiquitin from specific E2 ubiquitin-conjugating enzymes, and transfers it to substrates, generally promoting their degradation by the proteasome. Independently of its E3 ubiquitin-protein ligase activity, acts as an inhibitor of CPSF3 endonuclease activity by blocking CPSF3 active site. The polypeptide is E3 ubiquitin-protein ligase E3D (UBE3D) (Pongo abelii (Sumatran orangutan)).